The following is a 157-amino-acid chain: Transcription elongation factor GreB (157 aa).

Belongs to the GreA/GreB family. GreB subfamily.

In terms of biological role, necessary for efficient RNA polymerase transcription elongation past template-encoded arresting sites. The arresting sites in DNA have the property of trapping a certain fraction of elongating RNA polymerases that pass through, resulting in locked ternary complexes. Cleavage of the nascent transcript by cleavage factors such as GreA or GreB allows the resumption of elongation from the new 3'terminus. GreB releases sequences of up to 9 nucleotides in length. The chain is Transcription elongation factor GreB from Salmonella typhi.